The primary structure comprises 239 residues: Probable transcriptional regulatory protein VC_A0006 (239 aa).

This sequence belongs to the TACO1 family.

It localises to the cytoplasm. The protein is Probable transcriptional regulatory protein VC_A0006 of Vibrio cholerae serotype O1 (strain ATCC 39315 / El Tor Inaba N16961).